A 216-amino-acid polypeptide reads, in one-letter code: Refilin-B (216 aa).

The segment at 1-52 is disordered; that stretch reads MVGRLSLQDVPELVDTKKKGDGVLDSPDSGLPPSPSPSHWGLAAATGGGGER. A phosphoserine mark is found at serine 6 and serine 26.

Belongs to the Refilin family. In terms of assembly, interacts with FLNA and FLNB.

It localises to the cytoplasm. It is found in the cytoskeleton. Involved in the regulation of the perinuclear actin network and nuclear shape through interaction with filamins. Plays an essential role in the formation of cartilaginous skeletal elements. The chain is Refilin-B from Rattus norvegicus (Rat).